A 340-amino-acid polypeptide reads, in one-letter code: Glyceraldehyde-3-phosphate dehydrogenase (340 aa).

NAD(+) is bound by residues 13–14 (TI) and Gly112. 141-143 (SCN) provides a ligand contact to D-glyceraldehyde 3-phosphate. Cys142 (nucleophile) is an active-site residue. Arg170 lines the NAD(+) pocket. Residue 196–197 (HG) participates in D-glyceraldehyde 3-phosphate binding. Residue Gln302 coordinates NAD(+).

Belongs to the glyceraldehyde-3-phosphate dehydrogenase family. In terms of assembly, homotetramer.

The protein localises to the cytoplasm. The enzyme catalyses D-glyceraldehyde 3-phosphate + phosphate + NADP(+) = (2R)-3-phospho-glyceroyl phosphate + NADPH + H(+). The catalysed reaction is D-glyceraldehyde 3-phosphate + phosphate + NAD(+) = (2R)-3-phospho-glyceroyl phosphate + NADH + H(+). It participates in carbohydrate degradation; glycolysis; pyruvate from D-glyceraldehyde 3-phosphate: step 1/5. The polypeptide is Glyceraldehyde-3-phosphate dehydrogenase (gap) (Archaeoglobus fulgidus (strain ATCC 49558 / DSM 4304 / JCM 9628 / NBRC 100126 / VC-16)).